The chain runs to 760 residues: Alpha-amylase (760 aa).

Residues 1–34 (MSKRSKLLKRRMLSLSVICVLIGYGPVFNPVRSQ) form the signal peptide. 3 residues coordinate Ca(2+): Asn-143, Thr-184, and Asp-192. Residue Asp-222 is the Nucleophile of the active site. Ca(2+) is bound at residue His-226. Catalysis depends on Glu-262, which acts as the Proton donor.

This sequence belongs to the glycosyl hydrolase 13 family. In terms of assembly, monomer. It depends on Ca(2+) as a cofactor.

It catalyses the reaction Endohydrolysis of (1-&gt;4)-alpha-D-glucosidic linkages in polysaccharides containing three or more (1-&gt;4)-alpha-linked D-glucose units.. The polypeptide is Alpha-amylase (amyA) (Clostridium acetobutylicum (strain ATCC 824 / DSM 792 / JCM 1419 / IAM 19013 / LMG 5710 / NBRC 13948 / NRRL B-527 / VKM B-1787 / 2291 / W)).